The following is a 366-amino-acid chain: MNKIALYCRPGFEKECAAEITDKAGQKEIYGFARVKDNSGYVLFECYQYEDADRLIREIPFRELIFARQMLVVGELLRDLPPEDRISPIVGMLHGVIERAGELRVEVPDTNESKELLKFCRKFTVPLRNAMRQEKILLIRENVNRPVIHVFFIAPGCCYVGYSYSNNNSPFYMGIPRLKFPSDAPSRSTLKLEEAFHVFIPHDEWEERLASGLYAVDLGACPGGWTYQLVKRSMMVHAVDNGTMSKSLMDTGQVKHHKVDGFKFEPSAKNIYWLVCDMVEKPAKVTQLMVDWLVNGWCREAIFNLKLPMKKRYEEVAHNLQKMHLQLKEGGINAQIQAKHLYHDREEITVHVRRIWSAYAASRNDY.

Residues S188, 221-224 (CPGG), D240, D260, and D277 each bind S-adenosyl-L-methionine. The active-site Proton acceptor is the K306.

The protein belongs to the class I-like SAM-binding methyltransferase superfamily. RNA methyltransferase RlmE family. RlmM subfamily. In terms of assembly, monomer.

The protein localises to the cytoplasm. It carries out the reaction cytidine(2498) in 23S rRNA + S-adenosyl-L-methionine = 2'-O-methylcytidine(2498) in 23S rRNA + S-adenosyl-L-homocysteine + H(+). In terms of biological role, catalyzes the 2'-O-methylation at nucleotide C2498 in 23S rRNA. This chain is Ribosomal RNA large subunit methyltransferase M, found in Photorhabdus laumondii subsp. laumondii (strain DSM 15139 / CIP 105565 / TT01) (Photorhabdus luminescens subsp. laumondii).